We begin with the raw amino-acid sequence, 79 residues long: UPF0180 protein BCE_1513 (79 aa).

Belongs to the UPF0180 family.

This Bacillus cereus (strain ATCC 10987 / NRS 248) protein is UPF0180 protein BCE_1513.